Reading from the N-terminus, the 493-residue chain is MFS-type transporter efuF (493 aa).

Transmembrane regions (helical) follow at residues 90-110 (ITLVLFYVTFCLLDVPANMLL), 117-137 (IMLPTLMMGWGSMTLIQCAVH), 147-167 (LLMGAFEAGFMAGVVYYLTTF), 179-199 (IFYGAATIAGAFSGLLAYGVF), 211-231 (FLMIIEGSATILLASFAYWHL), 279-299 (IALYAVIGISYGVASASVGNF), 316-336 (LYTVAPYCVGCVILLAQCTSS), 343-363 (STHLAGAMLLTFVGFILLITL), 370-390 (GPTYFACFLLAAGAFTPSCIF), 406-426 (AVTGFMVGASNSGGIISSLAF), and 435-455 (IPALIVTATFQGVGIVLVLGF).

The protein belongs to the major facilitator superfamily.

The protein localises to the membrane. Functionally, MFS-type transporter; part of the gene cluster that mediates the biosynthesis of enfumafungin, a glycosylated fernene-type triterpenoid with potent antifungal activity, mediated by its interaction with beta-1,3-glucan synthase and the fungal cell wall. Might facilitate the transport of glucose units to the subcellular site of enfumafungin biosynthesis. This Hormonema carpetanum protein is MFS-type transporter efuF.